The chain runs to 151 residues: D-aminoacyl-tRNA deacylase (151 aa).

Residues 138–139 (GP) carry the Gly-cisPro motif, important for rejection of L-amino acids motif.

It belongs to the DTD family. In terms of assembly, homodimer.

The protein resides in the cytoplasm. The catalysed reaction is glycyl-tRNA(Ala) + H2O = tRNA(Ala) + glycine + H(+). It carries out the reaction a D-aminoacyl-tRNA + H2O = a tRNA + a D-alpha-amino acid + H(+). In terms of biological role, an aminoacyl-tRNA editing enzyme that deacylates mischarged D-aminoacyl-tRNAs. Also deacylates mischarged glycyl-tRNA(Ala), protecting cells against glycine mischarging by AlaRS. Acts via tRNA-based rather than protein-based catalysis; rejects L-amino acids rather than detecting D-amino acids in the active site. By recycling D-aminoacyl-tRNA to D-amino acids and free tRNA molecules, this enzyme counteracts the toxicity associated with the formation of D-aminoacyl-tRNA entities in vivo and helps enforce protein L-homochirality. The polypeptide is D-aminoacyl-tRNA deacylase (Magnetococcus marinus (strain ATCC BAA-1437 / JCM 17883 / MC-1)).